The chain runs to 514 residues: MSSKKPVVLVIRDGWGRNPLGPDVAKEYGDATVLADTPFTDYLLANYPHSLLGASGEDVGLPDGQMGNSEVGHLNLGAGRVVFQDLCRVDNAIKDGSMGENAVLKTAFSQAASSRLHLLGLVSDGGVHSHINHLIGIVKYAYEAGVRDICIHAITDGRDCSPTSGVGFIRQLEEAVRPYGAKIATVVGRFYAMDRDKRWDRNKLAWDAIVLGRGEQCSCSPAEYVEQCYAKGETDEFLKPGIFAYGNEQRVRDNDVVFFFNFRADRARQMSDAFLYPEFDGFDREVTPKVHYVTLTEYDAKYPSPIVFEQEQLNNIFGQIVSEAGKTQLRIAETEKYAHVTFFFNGGVETQFPGEDRILVPSPREVATYDLKPQMSAAEVADKFVDAVNKYDVVIMNFANGDMVGHTGFVEAGIAACEAVDSALEKCVKKVLELGGKLLITADHGNAEHMRNEDGSPNTAHTTNLVDLIYVADDKDQVTLSDGILADVAPTLLSLMGLKQPAEMSGHSLVTPGK.

Mn(2+)-binding residues include D13 and S69. S69 (phosphoserine intermediate) is an active-site residue. Substrate-binding positions include H128, 158-159 (RD), R189, R195, 263-266 (RADR), and K336. 5 residues coordinate Mn(2+): D402, H406, D443, H444, and H461.

This sequence belongs to the BPG-independent phosphoglycerate mutase family. As to quaternary structure, monomer. It depends on Mn(2+) as a cofactor.

It carries out the reaction (2R)-2-phosphoglycerate = (2R)-3-phosphoglycerate. It functions in the pathway carbohydrate degradation; glycolysis; pyruvate from D-glyceraldehyde 3-phosphate: step 3/5. Functionally, catalyzes the interconversion of 2-phosphoglycerate and 3-phosphoglycerate. In Akkermansia muciniphila (strain ATCC BAA-835 / DSM 22959 / JCM 33894 / BCRC 81048 / CCUG 64013 / CIP 107961 / Muc), this protein is 2,3-bisphosphoglycerate-independent phosphoglycerate mutase.